A 765-amino-acid polypeptide reads, in one-letter code: Zinc metalloproteinase nas-37 (765 aa).

The signal sequence occupies residues 1-22; the sequence is MKSQACLKVCLALIGLVSIVST. Positions 23–114 are excised as a propeptide; that stretch reads AYIANDVVSD…SESNSPRSRR (92 aa). The Peptidase M12A domain occupies 115–308; it reads QAHPDPRNFW…AKMINTRYCS (194 aa). An N-linked (GlcNAc...) asparagine glycan is attached at Asn-126. 6 cysteine pairs are disulfide-bonded: Cys-156–Cys-307, Cys-177–Cys-196, Cys-311–Cys-331, Cys-333–Cys-342, Cys-350–Cys-374, and Cys-400–Cys-420. His-204 contacts Zn(2+). Glu-205 is an active-site residue. Zn(2+)-binding residues include His-208 and His-214. Residues 303 to 343 form the EGF-like domain; sequence NTRYCSNVCQRSLPCLNEGYTDPNNCGRCRCPSGYGGTYCE. One can recognise a CUB domain in the interval 350 to 458; that stretch reads CGGSLTASSS…RGFTLKYRAI (109 aa). The segment at 513–573 is disordered; the sequence is KYSSEELYDP…TRPTPTTTVA (61 aa). Composition is skewed to low complexity over residues 526–545 and 562–573; these read LSPS…DASP and ALTRPTPTTTVA. The 52-residue stretch at 576 to 627 folds into the TSP type-1 domain; it reads TASWSAWGEWSACSQPCGGCGTKTRVRACYGGNQVCPGSNLDRESCNAHACA. Disulfide bonds link Cys-588/Cys-621, Cys-592/Cys-626, and Cys-604/Cys-611.

It depends on Zn(2+) as a cofactor. As to expression, expressed in hypodermal cells. Not expressed in the seam cells in L1 to L3 larvae, but it is present in seam cells of L4 larvae. Also expressed in attachment points of the cuticle at the anterior end of larvae, in the arcade cells in the mouth, the anterior pharynx, the amphid socket cells, and in the rectal epithelial cells at the posterior end of the larvae (at protein level).

Its subcellular location is the secreted. In terms of biological role, metalloprotease. Plays an essential role in molting, a process during larval stages in which a new cuticle is formed and the old cuticle is shed. Required during ecdysis, the opening of the cuticle to allow the worm to escape. In Caenorhabditis elegans, this protein is Zinc metalloproteinase nas-37 (nas-37).